Reading from the N-terminus, the 186-residue chain is Large ribosomal subunit protein uL6 (186 aa).

This sequence belongs to the universal ribosomal protein uL6 family. Part of the 50S ribosomal subunit.

Its function is as follows. This protein binds to the 23S rRNA, and is important in its secondary structure. It is located near the subunit interface in the base of the L7/L12 stalk, and near the tRNA binding site of the peptidyltransferase center. This Ignicoccus hospitalis (strain KIN4/I / DSM 18386 / JCM 14125) protein is Large ribosomal subunit protein uL6.